A 347-amino-acid chain; its full sequence is NADH-quinone oxidoreductase subunit H (347 aa).

The next 9 helical transmembrane spans lie at Leu13–Leu33, Pro50–Phe70, Gly82–Ile102, Val115–Gly135, Ile161–Val181, Phe198–Leu218, Phe248–Val268, Val286–Val306, and Val325–Gly345.

Belongs to the complex I subunit 1 family. As to quaternary structure, NDH-1 is composed of 14 different subunits. Subunits NuoA, H, J, K, L, M, N constitute the membrane sector of the complex.

The protein resides in the cell inner membrane. The enzyme catalyses a quinone + NADH + 5 H(+)(in) = a quinol + NAD(+) + 4 H(+)(out). Functionally, NDH-1 shuttles electrons from NADH, via FMN and iron-sulfur (Fe-S) centers, to quinones in the respiratory chain. The immediate electron acceptor for the enzyme in this species is believed to be ubiquinone. Couples the redox reaction to proton translocation (for every two electrons transferred, four hydrogen ions are translocated across the cytoplasmic membrane), and thus conserves the redox energy in a proton gradient. This subunit may bind ubiquinone. The sequence is that of NADH-quinone oxidoreductase subunit H from Brucella ovis (strain ATCC 25840 / 63/290 / NCTC 10512).